Here is a 687-residue protein sequence, read N- to C-terminus: Adhesion G-protein coupled receptor G1 (687 aa).

Positions 1–25 (MAVQVLRQMVYFLLSLFSLVQGAHS) are cleaved as a signal peptide. Residue 26–33 (GSPREDFR) coordinates heparin. Residues 26-402 (GSPREDFRFC…TEVEATHKHY (377 aa)) lie on the Extracellular side of the membrane. Intrachain disulfides connect cysteine 35-cysteine 91 and cysteine 121-cysteine 177. N-linked (GlcNAc...) asparagine glycosylation is found at asparagine 39, asparagine 148, and asparagine 171. 190–200 (LQHPQKAAKRP) contributes to the heparin binding site. The GAIN-B domain occupies 224–395 (DTLSFEEDRV…AVLMVSSTEV (172 aa)). 4 N-linked (GlcNAc...) asparagine glycosylation sites follow: asparagine 234, asparagine 303, asparagine 324, and asparagine 341. 2 disulfides stabilise this stretch: cysteine 346–cysteine 377 and cysteine 366–cysteine 379. Residues 346-395 (CVFWVEDPASSSTGSWSSAGCETVSRDTQTSCLCNHLTYFAVLMVSSTEV) form a GPS region. A stachel region spans residues 384–397 (YFAVLMVSSTEVEA). A helical membrane pass occupies residues 403–423 (LTLLSYVGCVISALACVFTIA). At 424–442 (AYLCSRRKSRDYTIKVHMN) the chain is on the cytoplasmic side. Residues 443–463 (LLSAVFLLDVSFLLSEPVALT) traverse the membrane as a helical segment. The Extracellular portion of the chain corresponds to 464–471 (GSEAACRT). The helical transmembrane segment at 472–492 (SAMFLHFSLLACLSWMGLEGY) threads the bilayer. Residues 493–512 (NLYRLVVEVFGTYVPGYLLK) are Cytoplasmic-facing. A helical membrane pass occupies residues 513-533 (LSIVGWGFPVFLVTLVALVDV). The Extracellular segment spans residues 534 to 570 (NNYGPIILAVRRTPERVTYPSMCWIRDSLVSYVTNLG). Residues 571 to 591 (LFSLVFLFNLAMLATMVVQIL) form a helical membrane-spanning segment. The Cytoplasmic segment spans residues 592 to 603 (RLRPHSQNWPHV). Residues 604 to 624 (LTLLGLSLVLGLPWALVFFSF) form a helical membrane-spanning segment. Residues 625-630 (ASGTFQ) lie on the Extracellular side of the membrane. Residues 631-651 (LVILYLFSIITSFQGFLIFLW) form a helical membrane-spanning segment. Residues 652 to 687 (YWSMRFQAQGGPSPLKNNSDSAKLPISSGSTSSSRI) lie on the Cytoplasmic side of the membrane. The tract at residues 664–687 (SPLKNNSDSAKLPISSGSTSSSRI) is disordered. Residues 678–687 (SSGSTSSSRI) show a composition bias toward low complexity.

The protein belongs to the G-protein coupled receptor 2 family. LN-TM7 subfamily. In terms of assembly, heterodimer of 2 chains generated by proteolytic processing; the large extracellular N-terminal fragment (ADGRG1 NT) and the membrane-bound C-terminal fragment (ADGRG1-CT) predominantly remain associated and non-covalently linked. ADGRG1 NT self-associates in a trans-trans manner; the homophilic interaction enhances receptor signaling. Interacts with TGM2. Interacts with heparin; leading to the reduction of ADGRG1 shedding. Interacts with COL3A1. Part of a GPCR-tetraspanin complex at least consisting of ADGRG1, CD81, eventually CD9, and GNA11 in which CD81 is enhancing the association of ADGRG1 with GNA11. Post-translationally, autoproteolytically cleaved into 2 fragments; the large extracellular N-terminal fragment and the membroune-bound C-terminal fragment predominantly remain associated and non-covalently linked. N-glycosylated. The secreted ADGRG1 N-terminal fragment is heavily glycosylated. In terms of processing, ubiquitinated. Undergoes polyubiquitination upon activation. As to expression, expressed in neural progenitor cells in fetal forbrain. Expressed in migrating neurons. Expressed in radial glial endfeet (at protein level). Expressed in peritubular myoid cells, Sertoli cells, and germ cells of the testis.

Its subcellular location is the cell membrane. The protein resides in the secreted. The protein localises to the membrane raft. With respect to regulation, forms a heterodimer of 2 chains generated by proteolytic processing that remain associated through non-covalent interactions mediated by the GAIN-B domain. In the inactivated receptor, the Stachel sequence (also named stalk) is embedded in the GAIN-B domain, where it adopts a beta-strand conformation. On activation, the Stachel moves into the 7 transmembrane region and adopts a twisted hook-shaped configuration that forms contacts within the receptor, leading to coupling of a G-alpha protein, which activates signaling. The cleaved GAIN-B and N-terminal domains can then dissociate from the rest of the receptor. Activated by the small-molecule agonist, 3-alpha-acetoxydihydrodeoxygedunin (3-alpha-DOG). Adhesion G-protein coupled receptor (aGPCR) for steroid hormone 17alpha-hydroxypregnenolone (17-OH), which is involved in cell adhesion and cell-cell interactions. Ligand binding causes a conformation change that triggers signaling via guanine nucleotide-binding proteins (G proteins) and modulates the activity of downstream effectors, such as RhoA pathway. ADGRG1 is coupled to G(12) and/or G(13) G proteins (GNA12 and GNA13, respectively) and mediates the activation Rho small GTPases. Acts as a potent suppressor of ferroptosis: binding to 17-OH-binding initiates signaling that down-regulates CD36 and alleviates ferroptosis-induced liver injury. Ligand-binding also induces cell adhesion activity via association with proteins such as collagen III/COL3A1 and TGM2. Mediates cell matrix adhesion in developing neurons and hematopoietic stem cells. Involved in cortical development, specifically in maintenance of the pial basement membrane integrity and in cortical lamination: association with COL3A1 in the developing brain inhibits neuronal migration via activation of the RhoA pathway. Together with TGM2, acts as a regulator of myelination and myelin repair in oligodendrocyte precursor cells. Acts as a hemostatic sensor of shear force: G protein-coupled receptor signaling is activated in response to shear force in platelets, promoting G(13) G protein signaling, and platelet shape change and aggregation in a COL3A1-dependent manner. Acts as an inhibitor of VEGFA production thereby inhibiting angiogenesis through a signaling pathway mediated by PRKCA. Plays a role in the maintenance of hematopoietic stem cells in bone marrow niche. Plays an essential role in testis development. In terms of biological role, adhesion G-protein coupled receptor (aGPCR) for phosphatidylserine, which is involved in microglia-mediated synapse pruning during development. Required to maintain appropriate synaptic numbers in several brain regions in a time- and circuit-dependent fashion: phosphatidylserine-binding acts as a 'eat-me' signal for apoptotic cells, leading to microglial engulfment of phosphatidylserine-positive synapses. The polypeptide is Adhesion G-protein coupled receptor G1 (Mus musculus (Mouse)).